The chain runs to 131 residues: Small ribosomal subunit protein uS10m (131 aa).

This sequence belongs to the universal ribosomal protein uS10 family.

It is found in the mitochondrion. This Dictyostelium discoideum (Social amoeba) protein is Small ribosomal subunit protein uS10m (mrps10).